The primary structure comprises 332 residues: Ketol-acid reductoisomerase (NADP(+)) 1 (332 aa).

The region spanning 2–182 is the KARI N-terminal Rossmann domain; that stretch reads AELFYDADAD…GGTRAGVIKT (181 aa). NADP(+)-binding positions include 25–28, serine 51, serine 53, and 83–86; these read YGSQ and DPIQ. Histidine 108 is an active-site residue. Glycine 134 serves as a coordination point for NADP(+). Residues 183–328 form the KARI C-terminal knotted domain; that stretch reads TFTEETETDL…KELRKLMSWV (146 aa). Mg(2+) is bound by residues aspartate 191, glutamate 195, glutamate 227, and glutamate 231. Serine 252 contacts substrate.

It belongs to the ketol-acid reductoisomerase family. Mg(2+) serves as cofactor.

The catalysed reaction is (2R)-2,3-dihydroxy-3-methylbutanoate + NADP(+) = (2S)-2-acetolactate + NADPH + H(+). It carries out the reaction (2R,3R)-2,3-dihydroxy-3-methylpentanoate + NADP(+) = (S)-2-ethyl-2-hydroxy-3-oxobutanoate + NADPH + H(+). It functions in the pathway amino-acid biosynthesis; L-isoleucine biosynthesis; L-isoleucine from 2-oxobutanoate: step 2/4. The protein operates within amino-acid biosynthesis; L-valine biosynthesis; L-valine from pyruvate: step 2/4. Its function is as follows. Involved in the biosynthesis of branched-chain amino acids (BCAA). Catalyzes an alkyl-migration followed by a ketol-acid reduction of (S)-2-acetolactate (S2AL) to yield (R)-2,3-dihydroxy-isovalerate. In the isomerase reaction, S2AL is rearranged via a Mg-dependent methyl migration to produce 3-hydroxy-3-methyl-2-ketobutyrate (HMKB). In the reductase reaction, this 2-ketoacid undergoes a metal-dependent reduction by NADPH to yield (R)-2,3-dihydroxy-isovalerate. The protein is Ketol-acid reductoisomerase (NADP(+)) 1 of Streptomyces coelicolor (strain ATCC BAA-471 / A3(2) / M145).